The primary structure comprises 432 residues: Glycerophosphocholine acyltransferase 1 (432 aa).

Residues 1–110 (MYKLDNNDID…DSIFFKNSSR (110 aa)) are Cytoplasmic-facing. Position 78 is a phosphoserine (S78). Residues 111–131 (LEKAFYPFTLFNIFFIGFLMG) traverse the membrane as a helical segment. R132 is a topological domain (lumenal). A helical membrane pass occupies residues 133–153 (FPEWFHVYYTILFFVLMPIRF). At 154 to 162 (YTYYKTKNH) the chain is on the cytoplasmic side. A helical membrane pass occupies residues 163–183 (YFLADFCYFVNMLCLLFIWIF). At 184–187 (PYSY) the chain is on the lumenal side. Residues 188-208 (SLFQSCFAFTFGTLCFAVITW) traverse the membrane as a helical segment. At 209 to 221 (RNSLVIHSIDKTT) the chain is on the cytoplasmic side. The chain crosses the membrane as a helical span at residues 222–242 (SCFIHIIPPCVMYVIYHGLPL). Residues 243–263 (EYKIERFPGAIIQSELDIKKN) are Lumenal-facing. The helical transmembrane segment at 264–284 (ILWTSLYYLVWQSLYHYFITL) threads the bilayer. At 285-318 (KKSSKIKSGERMTSFEYLTTHQFKNFWAVKLRSP) the chain is on the cytoplasmic side. The chain crosses the membrane as a helical span at residues 319–339 (WPMIIYTLSQYFYQLFTMLLC). Over 340–346 (GIWIRYK) the chain is Lumenal. Residues 347 to 369 (LAAALFLTIVFLWASHNGATYYI) form a helical membrane-spanning segment. Residues 370 to 432 (DHYGKNFEKE…DSSSVSSKSD (63 aa)) lie on the Cytoplasmic side of the membrane. Positions 413–432 (LNVNRDEDFDDSSSVSSKSD) are disordered.

Belongs to the GPC1 family.

The protein localises to the membrane. The catalysed reaction is sn-glycerol 3-phosphocholine + an acyl-CoA = a 1-acyl-sn-glycero-3-phosphocholine + CoA. The enzyme catalyses sn-glycero-3-phosphoethanolamine + an acyl-CoA = a monoacyl-sn-glycero-3-phosphoethanolamine + CoA. It catalyses the reaction sn-glycero-3-phosphoethanolamine + (9Z)-octadecenoyl-CoA = (9Z-octadecenoyl)-sn-glycero-3-phosphoethanolamine + CoA. It carries out the reaction sn-glycerol 3-phosphocholine + hexadecanoyl-CoA = hexadecanoyl-sn-glycero-3-phosphocholine + CoA. The catalysed reaction is (9Z,12Z)-octadecadienoyl-CoA + sn-glycerol 3-phosphocholine = (9Z,12Z-octadecadienoyl)-sn-glycero-3-phosphocholine + CoA. The enzyme catalyses (12R)-hydroxy-(9Z)-octadecenoyl-CoA + sn-glycerol 3-phosphocholine = (12R-hydroxy-9Z-octadecenoyl)-sn-glycero-3-phosphocholine + CoA. It catalyses the reaction (9Z,12Z,15Z)-octadecatrienoyl-CoA + sn-glycerol 3-phosphocholine = (9Z,12Z,15Z-octadecatrienoyl)-sn-glycero-3-phosphocholine + CoA. It carries out the reaction sn-glycerol 3-phosphocholine + (9Z)-octadecenoyl-CoA = (9Z-octadecenoyl)-sn-glycero-3-phosphocholine + CoA. The catalysed reaction is 1-(9Z-octadecenoyl)-sn-glycero-3-phosphoethanolamine + sn-glycerol 3-phosphocholine = (9Z-octadecenoyl)-sn-glycero-3-phosphocholine + sn-glycero-3-phosphoethanolamine. Its activity is regulated as follows. The GPCAT activity is sensitive to N-ethylmaleimide, phenanthroline, and divalent cations including Ca(2+), Mg(2+), Mn(2+) and Zn(2+). The activity is also inhibited by glycerol-3-phosphate (G3P). In terms of biological role, glycerophosphocholine acyltransferase (GPCAT) that utilizes acyl-CoA to acylate glycero-3-phosphocholine (GPC), forming lysophosphatidylcholine (LPC). Shows broad acyl specificities with a preference for 16:0-CoA, polyunsaturated acyl-CoA, and the hydroxylated ricinoleoyl-CoA. Also catalyzes the acylation of glycero-3-phosphoethanolamine (GPE) with acyl-CoA. In addition to acyl-CoA, GPCAT efficiently utilizes LPC and lysophosphatidylethanolamine (LPE) as acyl donors in the acylation of GPC. Contributes to the maintenance of phosphatidylcholine (PC) homeostasis and might also have specific functions in acyl editing of PC, such as transferring acyl groups modified at the sn-2 position of PC to the sn-1. Involved in postsynthetic PC remodeling that produces more saturated PC species. The chain is Glycerophosphocholine acyltransferase 1 from Saccharomyces cerevisiae (strain ATCC 204508 / S288c) (Baker's yeast).